A 1005-amino-acid polypeptide reads, in one-letter code: MSGPDKGSDSGQTANDPKQKKARNGQMETYSCARCRKLKKKCPRQLPECSNCLKAREPCNYPGRAPRRTKKELRDAIMKGEVLPSMRRKHRKIEKELKTADLRHLESVDDRPVNQVMGGSMPPLGAYRGGEQQYNNGPPISGIDGNDSINRGKAQSVGSYQILPPQRKSKLVLDQNPKFVHSQSSALKTNEYPVPIMSPHIANQVYPEGVSSLISALNTMNDNVSANTPIALSYLQLQKLHQEQQQIQQQQIQQQQQHQHLVQQHLQHVRADATSILPPVTSQTVYTPIPGPRTSQIPFGFTHGYTASAPPPLMQPYSMPTSPFESREKQQQFDNIQYHPVYKIPPIAARQSPIDEIIGIENGSISIDAGSITREVVNSRMKGPHSTSWVNEDGSPKPIKKSLLEKFVSAYFEHNHRLFPMVDKVTFLKKLATINSFESIEMLAVNNPELPKTFIFEIYMIMAIGCTTLQRAGKLTTDEGHLYEHLAYLAMRNFRDILHQQDITTLRCLILLGIYSFFEPKGVSSWTISGIAMRLAIELGLNRPLTAKEMGDMSAVEVESRYRVFWSAYCFERVVATSLGRVSAIDDEDIGIPLPRALYDSEKEDIEVTNLIISLRKMGGKIYKEVHSLSAGRKDITMEQKQLIIQKLRKELDDIYEEECEKRRLKGKSRSSKRFEKSKESDSDRGVTEEDVKSGNENLIGLLASDDVSMTEHGQSIDNTLESTPLPTTIPTTIVNDSVDQHSTLENIPTSATSKDQIETIITKPTANIMNDQTDSDPLPKVDNKPISNNEEGPKSLKEGNSEQNPSENISPEDVTLTKTDNSENKESSLRSNSNISFHISNVWLEMRYTQLQILLYRPSALIPKPPIESLTVLGEFCLAAWRHTYTLYKEKLLPLNWITLFRTLTICNTILYCLCQWSIDLVASTIEIQQCVEILQHFGEKWVFAMKCADVFQNISNTIVEISLSQGQDPNIDKLTRELFGASNAYLEILNENNVDVSWEDRFR.

The disordered stretch occupies residues 1–28 (MSGPDKGSDSGQTANDPKQKKARNGQME). The segment at residues 32–59 (CARCRKLKKKCPRQLPECSNCLKAREPC) is a DNA-binding region (zn(2)-C6 fungal-type). Disordered stretches follow at residues 129 to 151 (GGEQ…SINR), 666 to 693 (KGKS…EDVK), and 763 to 831 (TKPT…SSLR). The segment covering 673 to 693 (KRFEKSKESDSDRGVTEEDVK) has biased composition (basic and acidic residues). Residues 763 to 773 (TKPTANIMNDQ) are compositionally biased toward polar residues. The segment covering 792–801 (EGPKSLKEGN) has biased composition (basic and acidic residues).

It localises to the nucleus. Functionally, transcription factor that negatively regulates pleiotropic drug resistance genes, including the ABC transporter genes CDR1, PDH1, and YOR1. In Candida glabrata (strain ATCC 2001 / BCRC 20586 / JCM 3761 / NBRC 0622 / NRRL Y-65 / CBS 138) (Yeast), this protein is Negative regulator of pleiotropic drug resistance STB5.